We begin with the raw amino-acid sequence, 49 residues long: Large ribosomal subunit protein bL36 (49 aa).

This sequence belongs to the bacterial ribosomal protein bL36 family.

This chain is Large ribosomal subunit protein bL36, found in Delftia acidovorans (strain DSM 14801 / SPH-1).